Reading from the N-terminus, the 638-residue chain is Protein NSP-INTERACTING KINASE 1 (638 aa).

An N-terminal signal peptide occupies residues 1-31 (MESTIVMMMMITRSFFCFLGFLCLLCSSVHG). The Extracellular segment spans residues 32–248 (LLSPKGVNFE…AGGSRNHKMA (217 aa)). Asn-92 and Asn-103 each carry an N-linked (GlcNAc...) asparagine glycan. LRR repeat units follow at residues 104–128 (LTNLRIVLLQNNNIKGKIPAEIGRL), 130–152 (RLETLDLSDNFFHGEIPFSVGYL), 153–175 (QSLQYLRLNNNSLSGVFPLSLSN), and 177–200 (TQLAFLDLSYNNLSGPVPRFAAKT). Asn-162, Asn-175, Asn-188, Asn-219, and Asn-231 each carry an N-linked (GlcNAc...) asparagine glycan. Residues 249 to 269 (IAVGSSVGTVSLIFIAVGLFL) traverse the membrane as a helical segment. Residues 270 to 638 (WWRQRHNQNT…VQAMELSGPR (369 aa)) lie on the Cytoplasmic side of the membrane. Position 309 is a phosphothreonine (Thr-309). The 282-residue stretch at 312 to 593 (FSSKNLLGKG…EGDGLAEKWE (282 aa)) folds into the Protein kinase domain. ATP is bound at residue 318-326 (LGKGGYGNV). Thr-335 carries the phosphothreonine modification. Lys-340 is a binding site for ATP. Ser-393 and Ser-396 each carry phosphoserine. Residues 422–502 (YLHEQCDPKI…DVFGFGILLL (81 aa)) form an interaction with geminivirus NSP protein region. Asp-435 acts as the Proton acceptor in catalysis. Phosphothreonine is present on residues Thr-468, Thr-469, and Thr-474. Position 482 is a phosphotyrosine (Tyr-482). Ser-484 is subject to Phosphoserine. Thr-485 carries the phosphothreonine modification. At Ser-489 the chain carries Phosphoserine. Thr-566 is subject to Phosphothreonine.

The protein belongs to the protein kinase superfamily. Ser/Thr protein kinase family. In terms of assembly, oligomer. Interacts with geminivirus nuclear shuttle protein (NSP). Interacts with RPL10A and RPL18B. Autophosphorylated. In terms of tissue distribution, expressed in seedlings, leaves, roots, stems and flowers.

The protein localises to the cell membrane. It catalyses the reaction L-seryl-[protein] + ATP = O-phospho-L-seryl-[protein] + ADP + H(+). The catalysed reaction is L-threonyl-[protein] + ATP = O-phospho-L-threonyl-[protein] + ADP + H(+). With respect to regulation, inhibited by the viral nuclear shuttle protein (NSP) that binds to the region required for oligomerization. Its function is as follows. Involved in defense response to geminivirus and begomovirus infection via regulation of the nuclear trafficking of RPL10A. Phosphorylates RPL10A in vitro. Activation of NIK1 down-regulates cytosolic translation. The protein is Protein NSP-INTERACTING KINASE 1 of Arabidopsis thaliana (Mouse-ear cress).